The chain runs to 210 residues: Thymidylate kinase (210 aa).

13 to 20 (GLEGAGKS) serves as a coordination point for ATP.

Belongs to the thymidylate kinase family.

The enzyme catalyses dTMP + ATP = dTDP + ADP. Functionally, phosphorylation of dTMP to form dTDP in both de novo and salvage pathways of dTTP synthesis. This is Thymidylate kinase from Shewanella loihica (strain ATCC BAA-1088 / PV-4).